Here is a 203-residue protein sequence, read N- to C-terminus: Holliday junction branch migration complex subunit RuvA (203 aa).

The domain I stretch occupies residues 1 to 61 (MIIYKYGKIM…EYTKVTYGFD (61 aa)). The domain II stretch occupies residues 62 to 139 (NFKELVIFED…KFMKKLTSDE (78 aa)). The interval 140–147 (AAKIKVPA) is flexible linker. Positions 147 to 203 (ASSENENKFLDTMKMLGFKQQQIKFALDKIELNDDIETCVENAIKLISQQQHETSRV) are domain III.

Belongs to the RuvA family. Homotetramer. Forms an RuvA(8)-RuvB(12)-Holliday junction (HJ) complex. HJ DNA is sandwiched between 2 RuvA tetramers; dsDNA enters through RuvA and exits via RuvB. An RuvB hexamer assembles on each DNA strand where it exits the tetramer. Each RuvB hexamer is contacted by two RuvA subunits (via domain III) on 2 adjacent RuvB subunits; this complex drives branch migration. In the full resolvosome a probable DNA-RuvA(4)-RuvB(12)-RuvC(2) complex forms which resolves the HJ.

Its subcellular location is the cytoplasm. The RuvA-RuvB-RuvC complex processes Holliday junction (HJ) DNA during genetic recombination and DNA repair, while the RuvA-RuvB complex plays an important role in the rescue of blocked DNA replication forks via replication fork reversal (RFR). RuvA specifically binds to HJ cruciform DNA, conferring on it an open structure. The RuvB hexamer acts as an ATP-dependent pump, pulling dsDNA into and through the RuvAB complex. HJ branch migration allows RuvC to scan DNA until it finds its consensus sequence, where it cleaves and resolves the cruciform DNA. The polypeptide is Holliday junction branch migration complex subunit RuvA (Metamycoplasma arthritidis (strain 158L3-1) (Mycoplasma arthritidis)).